The sequence spans 330 residues: MGDLSIQNLVVEYYSGGYALRPINGLNLDVAAGSLVMLLGPSGCGKTTLLSCLGGILRPKSGAIKFDEVDITTLQGAELANYRRNKVGIVFQAFNLVPSLTAVENVMVPLRSAGMSRRASRRRAEELLARVNLAERMNHRPGDLSGGQQQRVAVARAIALDPPLILADEPTAHLDFIQVEEVLRLIRELADGERVVVVATHDSRMLPMADRVVELTPDFAETNRPPETVHLQAGEVLFEQSTMGDLIYVVSEGEFEIVHELADGGEELVKVAGPGDYFGEIGVLFHLPRSATVRARSDATAVGYTVQAFRERLGVGGLRDLIEHRALAND.

Residues 4–242 form the ABC transporter domain; sequence LSIQNLVVEY…AGEVLFEQST (239 aa). Residue 40–47 coordinates ATP; that stretch reads GPSGCGKT. 210–330 contributes to the a nucleoside 3',5'-cyclic phosphate binding site; sequence DRVVELTPDF…LIEHRALAND (121 aa).

This sequence belongs to the ABC transporter superfamily. The complex is composed of two ATP-binding proteins (MT0079), two transmembrane proteins (MT0078) and a solute-binding protein.

In terms of biological role, probably part of an ABC transporter complex. Probably responsible for energy coupling to the transport system. This is an uncharacterized protein from Mycobacterium tuberculosis (strain CDC 1551 / Oshkosh).